We begin with the raw amino-acid sequence, 143 residues long: Nucleoside diphosphate kinase (143 aa).

ATP is bound by residues lysine 11, phenylalanine 59, arginine 87, threonine 93, arginine 104, and asparagine 114. Histidine 117 acts as the Pros-phosphohistidine intermediate in catalysis.

Belongs to the NDK family. As to quaternary structure, homotetramer. Requires Mg(2+) as cofactor.

It is found in the cytoplasm. The catalysed reaction is a 2'-deoxyribonucleoside 5'-diphosphate + ATP = a 2'-deoxyribonucleoside 5'-triphosphate + ADP. It catalyses the reaction a ribonucleoside 5'-diphosphate + ATP = a ribonucleoside 5'-triphosphate + ADP. In terms of biological role, major role in the synthesis of nucleoside triphosphates other than ATP. The ATP gamma phosphate is transferred to the NDP beta phosphate via a ping-pong mechanism, using a phosphorylated active-site intermediate. This Clostridium perfringens (strain ATCC 13124 / DSM 756 / JCM 1290 / NCIMB 6125 / NCTC 8237 / Type A) protein is Nucleoside diphosphate kinase.